The chain runs to 311 residues: DNA repair and recombination protein RadA (311 aa).

Residue Gly104–Ser111 coordinates ATP.

Belongs to the eukaryotic RecA-like protein family.

In terms of biological role, involved in DNA repair and in homologous recombination. Binds and assemble on single-stranded DNA to form a nucleoprotein filament. Hydrolyzes ATP in a ssDNA-dependent manner and promotes DNA strand exchange between homologous DNA molecules. The polypeptide is DNA repair and recombination protein RadA (Methanosphaera stadtmanae (strain ATCC 43021 / DSM 3091 / JCM 11832 / MCB-3)).